Consider the following 279-residue polypeptide: Urease accessory protein UreD (279 aa).

It belongs to the UreD family. In terms of assembly, ureD, UreF and UreG form a complex that acts as a GTP-hydrolysis-dependent molecular chaperone, activating the urease apoprotein by helping to assemble the nickel containing metallocenter of UreC. The UreE protein probably delivers the nickel.

It is found in the cytoplasm. In terms of biological role, required for maturation of urease via the functional incorporation of the urease nickel metallocenter. The sequence is that of Urease accessory protein UreD from Nitrosospira multiformis (strain ATCC 25196 / NCIMB 11849 / C 71).